We begin with the raw amino-acid sequence, 240 residues long: Probable transcriptional regulatory protein Adeh_2184 (240 aa).

It belongs to the TACO1 family.

It is found in the cytoplasm. The protein is Probable transcriptional regulatory protein Adeh_2184 of Anaeromyxobacter dehalogenans (strain 2CP-C).